Reading from the N-terminus, the 76-residue chain is uncharacterized protein (76 aa).

Positions 1-24 are disordered; that stretch reads MPLRLCQGRKDRASDPVRDDGSPP. Residues 8–22 show a composition bias toward basic and acidic residues; the sequence is GRKDRASDPVRDDGS.

This is an uncharacterized protein from Dryophytes versicolor (chameleon treefrog).